Consider the following 401-residue polypeptide: Rho-N domain-containing protein 1, chloroplastic (401 aa).

A chloroplast-targeting transit peptide spans methionine 1 to arginine 63. Disordered regions lie at residues proline 73–arginine 129 and lysine 180–valine 361. 3 stretches are compositionally biased toward polar residues: residues aspartate 102 to proline 126, threonine 210 to alanine 223, and proline 240 to threonine 265. Positions glutamine 266–glutamate 290 are enriched in basic and acidic residues. Residues leucine 339–glutamate 358 show a composition bias toward acidic residues. Residues leucine 339–glutamate 371 are a coiled coil.

In terms of assembly, homodimer or homomultimer. Part of a chloroplastic degradosome-like complex. Interacts with RNE.

It is found in the plastid. The protein localises to the chloroplast. Binds to and supports processing of specific plastid RNAs. Associates via its C-terminal Rho-N domain to single stranded regions of 16S and 23S rRNAs or to rbcL mRNAs. May be involved in targeting transcripts to RNases such as RNE or RNase J. The chain is Rho-N domain-containing protein 1, chloroplastic (RHON1) from Arabidopsis thaliana (Mouse-ear cress).